Reading from the N-terminus, the 165-residue chain is C-phycoerythrin class 2 subunit alpha (165 aa).

Phycourobilin contacts are provided by C75, C83, and C140.

This sequence belongs to the phycobiliprotein family. In terms of assembly, heterodimer of an alpha and a beta chain. Post-translationally, contains three covalently linked phycourobilin chromophores.

The protein localises to the cellular thylakoid membrane. In terms of biological role, light-harvesting photosynthetic bile pigment-protein from the phycobiliprotein complex. The sequence is that of C-phycoerythrin class 2 subunit alpha (mpeA) from Synechococcus sp. (strain WH8103).